Consider the following 1759-residue polypeptide: Protein TIC 214 (1759 aa).

Helical transmembrane passes span 23 to 45 (VVVGLYYGFMTTFSIGPSYLFLL), 64 to 84 (FITGQLIIFMSIYYAPLHLAL), 129 to 149 (IFFQNLLFQFFNPLFLPSSIF), 172 to 192 (IGWIIGHTFFMKWIEFLLICI), and 221 to 241 (IFVVFLFVTCLYYLGRIPPPF).

The protein belongs to the TIC214 family. Part of the Tic complex.

The protein localises to the plastid. The protein resides in the chloroplast inner membrane. In terms of biological role, involved in protein precursor import into chloroplasts. May be part of an intermediate translocation complex acting as a protein-conducting channel at the inner envelope. This chain is Protein TIC 214, found in Phaseolus vulgaris (Kidney bean).